Reading from the N-terminus, the 301-residue chain is Diaminopimelate epimerase (301 aa).

The substrate site is built by Asn-15, Gln-47, and Asn-67. Cys-76 acts as the Proton donor in catalysis. Residues Gly-77 to Asn-78, Asn-163, Asn-197, and Glu-215 to Arg-216 contribute to the substrate site. Residue Cys-224 is the Proton acceptor of the active site. Gly-225 to Ser-226 is a binding site for substrate.

This sequence belongs to the diaminopimelate epimerase family. Homodimer.

The protein localises to the cytoplasm. The enzyme catalyses (2S,6S)-2,6-diaminopimelate = meso-2,6-diaminopimelate. It participates in amino-acid biosynthesis; L-lysine biosynthesis via DAP pathway; DL-2,6-diaminopimelate from LL-2,6-diaminopimelate: step 1/1. Catalyzes the stereoinversion of LL-2,6-diaminopimelate (L,L-DAP) to meso-diaminopimelate (meso-DAP), a precursor of L-lysine and an essential component of the bacterial peptidoglycan. This chain is Diaminopimelate epimerase, found in Rhizobium meliloti (strain 1021) (Ensifer meliloti).